Here is an 89-residue protein sequence, read N- to C-terminus: Small ribosomal subunit protein uS17 (89 aa).

It belongs to the universal ribosomal protein uS17 family. In terms of assembly, part of the 30S ribosomal subunit.

Its function is as follows. One of the primary rRNA binding proteins, it binds specifically to the 5'-end of 16S ribosomal RNA. This is Small ribosomal subunit protein uS17 from Xanthomonas campestris pv. campestris (strain B100).